Consider the following 248-residue polypeptide: Carbohydrate deacetylase (248 aa).

Mg(2+) is bound by residues His59 and His121.

The protein belongs to the YdjC deacetylase family. It depends on Mg(2+) as a cofactor.

Functionally, probably catalyzes the deacetylation of acetylated carbohydrates an important step in the degradation of oligosaccharides. This chain is Carbohydrate deacetylase, found in Brevibacillus brevis (strain 47 / JCM 6285 / NBRC 100599).